A 48-amino-acid polypeptide reads, in one-letter code: Hemoglobin subunit beta-B (48 aa).

The Globin domain maps to 2–48 (EWTDAERGAILSLWGKIDPDELGPALLARXXLVYXXTQRYFASFGDL).

This sequence belongs to the globin family. In terms of assembly, heterotetramer of two alpha chains and two beta chains. Red blood cells.

Involved in oxygen transport from gills to the various peripheral tissues. The polypeptide is Hemoglobin subunit beta-B (Catostomus clarkii (Desert sucker)).